The following is a 295-amino-acid chain: GTPase Era (295 aa).

Positions 7–176 (KTVSVCIIGR…ITSKAKIAPW (170 aa)) constitute an Era-type G domain. Residues 15–22 (GRPNSGKS) are G1. 15–22 (GRPNSGKS) serves as a coordination point for GTP. The G2 stretch occupies residues 41-45 (QTTRS). Positions 62-65 (DTPG) are G3. Residues 62 to 66 (DTPGI) and 124 to 127 (NKID) contribute to the GTP site. Residues 124–127 (NKID) form a G4 region. Residues 152–154 (ISA) form a G5 region. Residues 204–281 (LQQELPYKLT…HLFLFVKVRE (78 aa)) enclose the KH type-2 domain.

This sequence belongs to the TRAFAC class TrmE-Era-EngA-EngB-Septin-like GTPase superfamily. Era GTPase family. Monomer.

The protein resides in the cytoplasm. It localises to the cell inner membrane. Its function is as follows. An essential GTPase that binds both GDP and GTP, with rapid nucleotide exchange. Plays a role in 16S rRNA processing and 30S ribosomal subunit biogenesis and possibly also in cell cycle regulation and energy metabolism. The protein is GTPase Era of Rickettsia bellii (strain OSU 85-389).